The chain runs to 189 residues: Chitin synthase 1 (189 aa).

Belongs to the chitin synthase family. Class I subfamily.

The protein resides in the cell membrane. The enzyme catalyses [(1-&gt;4)-N-acetyl-beta-D-glucosaminyl](n) + UDP-N-acetyl-alpha-D-glucosamine = [(1-&gt;4)-N-acetyl-beta-D-glucosaminyl](n+1) + UDP + H(+). Its function is as follows. Polymerizes chitin, a structural polymer of the cell wall and septum, by transferring the sugar moiety of UDP-GlcNAc to the non-reducing end of the growing chitin polymer. This Rhinocladiella atrovirens protein is Chitin synthase 1 (CHS1).